The following is a 358-amino-acid chain: Neuronal-specific septin-3 (358 aa).

Residues 1–10 (MSKGLPETRT) are compositionally biased toward basic and acidic residues. The tract at residues 1 to 30 (MSKGLPETRTDAAMSELVPEPRPKPAVPMK) is disordered. One can recognise a Septin-type G domain in the interval 58-331 (TGFDFNIMVV…ETYRAKRLND (274 aa)). A G1 motif region spans residues 68 to 75 (GQSGLGKS). 68–75 (GQSGLGKS) is a binding site for GTP. Ser-91 carries the post-translational modification Phosphoserine. Thr-102 is a GTP binding site. Residues 125–128 (DTPG) are G3 motif. The interval 207-210 (AKAD) is G4 motif. GTP-binding positions include 208 to 216 (KADTMTLEE), Gly-265, and Arg-280.

This sequence belongs to the TRAFAC class TrmE-Era-EngA-EngB-Septin-like GTPase superfamily. Septin GTPase family. As to quaternary structure, septins polymerize into heterooligomeric protein complexes that form filaments, and can associate with cellular membranes, actin filaments and microtubules. GTPase activity is required for filament formation. Phosphorylated by PKG on serine residues. Phosphorylated by PKG on Ser-91. As to expression, brain-specific.

The protein resides in the cytoplasm. Its subcellular location is the cytoskeleton. It is found in the synapse. In terms of biological role, filament-forming cytoskeletal GTPase. May play a role in cytokinesis (Potential). This Homo sapiens (Human) protein is Neuronal-specific septin-3.